The sequence spans 134 residues: MTNIRKTHPLLKIINNSLVDLPAPSSLTSWWNFGSLLGVCLGVQILTGLFLAMHYTSDTATAFNSVTHICRDVNYGWLLRYLHANGASMFFICLYLHVGRGLYYGSYTYSETWNIGILLLFAVMATDFMGYVLP.

Helical transmembrane passes span 33–53 (FGSL…FLAM), 77–98 (WLLR…YLHV), and 113–133 (WNIG…GYVL). Heme b contacts are provided by His83 and His97.

This sequence belongs to the cytochrome b family. The cytochrome bc1 complex contains 11 subunits: 3 respiratory subunits (MT-CYB, CYC1 and UQCRFS1), 2 core proteins (UQCRC1 and UQCRC2) and 6 low-molecular weight proteins (UQCRH/QCR6, UQCRB/QCR7, UQCRQ/QCR8, UQCR10/QCR9, UQCR11/QCR10 and a cleavage product of UQCRFS1). This cytochrome bc1 complex then forms a dimer. Heme b is required as a cofactor.

The protein resides in the mitochondrion inner membrane. Its function is as follows. Component of the ubiquinol-cytochrome c reductase complex (complex III or cytochrome b-c1 complex) that is part of the mitochondrial respiratory chain. The b-c1 complex mediates electron transfer from ubiquinol to cytochrome c. Contributes to the generation of a proton gradient across the mitochondrial membrane that is then used for ATP synthesis. The polypeptide is Cytochrome b (MT-CYB) (Sturnira tildae (Tilda's yellow-shouldered bat)).